The following is a 448-amino-acid chain: Glutamyl-tRNA reductase (448 aa).

Substrate is bound by residues 49–52 (TCNR), serine 109, 114–116 (ETQ), and glutamine 120. Catalysis depends on cysteine 50, which acts as the Nucleophile. Residue 189–194 (GAGEMS) coordinates NADP(+).

It belongs to the glutamyl-tRNA reductase family. Homodimer.

The enzyme catalyses (S)-4-amino-5-oxopentanoate + tRNA(Glu) + NADP(+) = L-glutamyl-tRNA(Glu) + NADPH + H(+). The protein operates within porphyrin-containing compound metabolism; protoporphyrin-IX biosynthesis; 5-aminolevulinate from L-glutamyl-tRNA(Glu): step 1/2. Functionally, catalyzes the NADPH-dependent reduction of glutamyl-tRNA(Glu) to glutamate 1-semialdehyde (GSA). The protein is Glutamyl-tRNA reductase of Staphylococcus haemolyticus (strain JCSC1435).